Reading from the N-terminus, the 71-residue chain is Gas vesicle protein A (71 aa).

Positions 12 to 22 (LAEVIDRILDK) are alpha helix 1. The tract at residues 26–34 (IDAWARVSL) is beta-strand 1. The beta turn stretch occupies residues 35–37 (VGI). Positions 38–46 (ELLAIEARV) are beta-strand 2. The tract at residues 51 to 70 (VETYLKYAEAVGLTQXAXXA) is alpha helix 2.

It belongs to the gas vesicle GvpA family. In terms of assembly, the gas vesicle shell is 2 nm thick and consists of a single layer of this protein. It forms helical ribs nearly perpendicular to the long axis of the vesicle.

It localises to the gas vesicle shell. Its function is as follows. Gas vesicles are hollow, gas filled proteinaceous nanostructures found in some microorganisms. During planktonic growth they allow positioning of the organism at a favorable depth for light or nutrient acquisition. GvpA forms the protein shell. The protein is Gas vesicle protein A of Microcystis sp. (strain BC 84/1).